We begin with the raw amino-acid sequence, 674 residues long: Nucleoporin NDC1 (674 aa).

At 1–24 (MATAVSRPCAGRSRDILWRVLGWR) the chain is on the cytoplasmic side. A helical membrane pass occupies residues 25-45 (IVASIVWSVLFLPICTTVFII). Residues 46–68 (FSRIDLFHPIQWLSDSFSDLYSS) are Perinuclear space-facing. The chain crosses the membrane as a helical span at residues 69-89 (YVIFYFLLLSVVIIIISIFNV). Residues 90-114 (EFYAVVPSIPCSRLALIGKIIHPQQ) are Cytoplasmic-facing. The helical transmembrane segment at 115–135 (LMHSFIHAAMGMVMAWCAAVI) threads the bilayer. The Perinuclear space portion of the chain corresponds to 136–165 (TQGQYSFLVVPCTGTNSFGSPAAQTCLNEY). Residues 166–186 (HLFFLLTGAFMGYSYSLLYFV) form a helical membrane-spanning segment. Residues 187–225 (NNMNYLPFPIIQQYKFLRFRRSLLLLVKHSCVESLFLVR) are Cytoplasmic-facing. A helical transmembrane segment spans residues 226-246 (NFCILYYFLGYIPKAWISTAM). The Perinuclear space portion of the chain corresponds to 247–272 (NLHIDEQVHRPLDTVSGLLNLSLLYH). The chain crosses the membrane as a helical span at residues 273-293 (VWLCGVFLLTTWYVSWILFKI). The Cytoplasmic segment spans residues 294 to 674 (YATEAHVFPV…RLQQFLEFKE (381 aa)). The interval 394-425 (SSSYPVEPKKLNSPEETAFQTPKSSQMPRPSV) is disordered. At S406 the chain carries Phosphoserine. The segment covering 407–421 (PEETAFQTPKSSQMP) has biased composition (polar residues). T414 carries the phosphothreonine modification. Position 439 is a phosphoserine (S439). Residue T440 is modified to Phosphothreonine. S445 is modified (phosphoserine). Phosphothreonine is present on T449. 2 positions are modified to phosphoserine: S471 and S474.

This sequence belongs to the NDC1 family. Interacts with the NUP35/NUP53. Interacts with AAAS, anchoring it to the nuclear envelope.

Its subcellular location is the nucleus. It localises to the nuclear pore complex. The protein localises to the nucleus membrane. Its function is as follows. Component of the nuclear pore complex (NPC), which plays a key role in de novo assembly and insertion of NPC in the nuclear envelope. Required for NPC and nuclear envelope assembly, possibly by forming a link between the nuclear envelope membrane and soluble nucleoporins, thereby anchoring the NPC in the membrane. This chain is Nucleoporin NDC1 (NDC1), found in Homo sapiens (Human).